Reading from the N-terminus, the 227-residue chain is Endo-1,4-beta-xylanase 1 (227 aa).

An N-terminal signal peptide occupies residues 1 to 19 (MVSLKSVLAAATAVSSAIA). Residues 37–225 (QVTPNAEGWH…SSGESDIYVQ (189 aa)) enclose the GH11 domain. Glu-121 functions as the Nucleophile in the catalytic mechanism. Glu-212 (proton donor) is an active-site residue.

The protein belongs to the glycosyl hydrolase 11 (cellulase G) family.

It catalyses the reaction Endohydrolysis of (1-&gt;4)-beta-D-xylosidic linkages in xylans.. The protein operates within glycan degradation; xylan degradation. The chain is Endo-1,4-beta-xylanase 1 from Humicola insolens (Soft-rot fungus).